The chain runs to 465 residues: Cerebellar degeneration-related protein 2-like (465 aa).

Coiled coils occupy residues 38–143 (LLER…EQLR) and 188–265 (LEQE…TYLL). The segment at 282 to 314 (APEADDPQPGRGDDLGAQDGVSSPAASPGHVVR) is disordered. Phosphoserine is present on residues Ser-308, Ser-318, and Ser-344. Residues 350–377 (MSILREVDEQYHALLEKYEELLSKCRQH) are a coiled coil. A disordered region spans residues 382 to 417 (RHAGVQTSRPISRDSSWRDLRGGEEGQGEVKAGEKS). Over residues 392–405 (ISRDSSWRDLRGGE) the composition is skewed to basic and acidic residues.

This sequence belongs to the CDR2 family.

The sequence is that of Cerebellar degeneration-related protein 2-like (CDR2L) from Homo sapiens (Human).